The sequence spans 165 residues: PTS system glucose-specific EIIA component (165 aa).

The PTS EIIA type-1 domain occupies 34 to 138 (DPVFAQKMMG…SSITPIIISN (105 aa)). Residues His-71 and His-86 each contribute to the Zn(2+) site. His-86 functions as the Tele-phosphohistidine intermediate; for EIIA activity in the catalytic mechanism. Residue His-86 is modified to Phosphohistidine; by HPr.

As to quaternary structure, heterodimer with glycerol kinase (glpk). It depends on Zn(2+) as a cofactor.

It localises to the cytoplasm. Its function is as follows. The phosphoenolpyruvate-dependent sugar phosphotransferase system (sugar PTS), a major carbohydrate active transport system, catalyzes the phosphorylation of incoming sugar substrates concomitantly with their translocation across the cell membrane. The enzyme II complex composed of PtsG and Crr is involved in glucose transport. This is PTS system glucose-specific EIIA component (crr) from Oceanobacillus iheyensis (strain DSM 14371 / CIP 107618 / JCM 11309 / KCTC 3954 / HTE831).